A 212-amino-acid polypeptide reads, in one-letter code: Thymidylate kinase (212 aa).

ATP is bound at residue 10-17 (GIDGCGKT).

The protein belongs to the thymidylate kinase family.

The enzyme catalyses dTMP + ATP = dTDP + ADP. Functionally, phosphorylation of dTMP to form dTDP in both de novo and salvage pathways of dTTP synthesis. This is Thymidylate kinase from Prochlorococcus marinus (strain MIT 9301).